The primary structure comprises 697 residues: MALSPGELELIRSALGREPTEVEYALFRSHWSEHCSYKSTRMWLRRLPSKAPWVVRGPGTDAPLVEIAEGLYATFKIESHNHPSAVDPYNGAATGVGGIIRDILTVGARPIALLVNLHFGPPSHPHARWIAVNVIRGISDYGNRVGVPVVGGETWFHEDFTYTPIVLATCVGIVEKDGVPPGGAEPGDLIIVAGLGADKSGLGGSAFASKTLSEEAEEDLGAVQVADPLMGKKLIDLVREARSCVKFIKDLGGGGLATALAELAEWFQLGVVAELDKIHMADREMGPAEVLTSETQERMVFVTSPSKLECLERLLEKFEVPYSIVGRFTAEGRVVLKWRGEVVGDLPLSLVAKAPETPWPQEPYAPPPLPHVPEPPIEKAIDAVLSSPNVAFKQAIYERFDFDVGVRTVLKPGEGDAAVLKIYERGNLGLAVKGDANPRFTYLNPRLGAANAFIKAYRNVAVVGGRPLAAVDSINVGSPSRPSAYWQFVEAVEGLREAAEALGVPIVGGKVSLYNEYKGKPVAPTVAVVVLGVVEDVSKVNKAVWKEGDGVYVWGVTKDEVGGSEYLHRVHGLVAGQPPSIDYSVEKELAAVVRKWAGRLTGAKDVGLGGLAAALAKMAAASGIGADIDICKAPSTTARLDYLLFSESNGRFIAAGEEGPGTRVGAAGGDYFTLRCGSTIVYKRKVEELAELMSLKI.

Residue histidine 34 is part of the active site. Positions 37 and 76 each coordinate ATP. Glutamate 78 contributes to the Mg(2+) binding site. Residues 79–82 (SHNH) and arginine 101 each bind substrate. Histidine 80 (proton acceptor) is an active-site residue. Mg(2+) is bound at residue aspartate 102. Residue glutamine 224 coordinates substrate. Position 250 (aspartate 250) interacts with Mg(2+). Residue 294–296 (ETQ) participates in substrate binding. Residues aspartate 472 and glycine 509 each contribute to the ATP site. Serine 512 is a substrate binding site.

It belongs to the FGAMS family. Monomer. Part of the FGAM synthase complex composed of 1 PurL, 1 PurQ and 2 PurS subunits.

The protein localises to the cytoplasm. The enzyme catalyses N(2)-formyl-N(1)-(5-phospho-beta-D-ribosyl)glycinamide + L-glutamine + ATP + H2O = 2-formamido-N(1)-(5-O-phospho-beta-D-ribosyl)acetamidine + L-glutamate + ADP + phosphate + H(+). Its pathway is purine metabolism; IMP biosynthesis via de novo pathway; 5-amino-1-(5-phospho-D-ribosyl)imidazole from N(2)-formyl-N(1)-(5-phospho-D-ribosyl)glycinamide: step 1/2. Its function is as follows. Part of the phosphoribosylformylglycinamidine synthase complex involved in the purines biosynthetic pathway. Catalyzes the ATP-dependent conversion of formylglycinamide ribonucleotide (FGAR) and glutamine to yield formylglycinamidine ribonucleotide (FGAM) and glutamate. The FGAM synthase complex is composed of three subunits. PurQ produces an ammonia molecule by converting glutamine to glutamate. PurL transfers the ammonia molecule to FGAR to form FGAM in an ATP-dependent manner. PurS interacts with PurQ and PurL and is thought to assist in the transfer of the ammonia molecule from PurQ to PurL. The protein is Phosphoribosylformylglycinamidine synthase subunit PurL of Pyrobaculum aerophilum (strain ATCC 51768 / DSM 7523 / JCM 9630 / CIP 104966 / NBRC 100827 / IM2).